Reading from the N-terminus, the 273-residue chain is Large ribosomal subunit protein uL2 (273 aa).

Residues 221-262 (RGTAMNPVDHPHGGGEGRNFGKHPVTPWGVQTKGKKTRHNKR) form a disordered region. Basic residues predominate over residues 253–262 (KGKKTRHNKR).

It belongs to the universal ribosomal protein uL2 family. As to quaternary structure, part of the 50S ribosomal subunit. Forms a bridge to the 30S subunit in the 70S ribosome.

In terms of biological role, one of the primary rRNA binding proteins. Required for association of the 30S and 50S subunits to form the 70S ribosome, for tRNA binding and peptide bond formation. It has been suggested to have peptidyltransferase activity; this is somewhat controversial. Makes several contacts with the 16S rRNA in the 70S ribosome. The sequence is that of Large ribosomal subunit protein uL2 from Aggregatibacter actinomycetemcomitans (Actinobacillus actinomycetemcomitans).